The sequence spans 630 residues: MTQTYNADAIEVLTGLEPVRRRPGMYTDTTRPNHLGQEVIDNSVDEALAGHAKRVDVILHADQSLEVIDDGRGMPVDIHPEEGVPAVELILCRLHAGGKFSNKNYQFSGGLHGVGISVVNALSKRVEVNVRRDGQVYNIAFENGEKVQDLQVVGTCGKRNTGTSVHFWPDETFFDSPRFSVSRLTHVLKAKAVLCPGVEITFKDEINNTEQRWCYQDGLNDYLAEAVNGLPTLPEKPFIGNFAGDTEAVDWALLWLPEGGELLTESYVNLIPTMQGGTHVNGLRQGLLDAMREFCEYRNILPRGVKLSAEDIWDRCAYVLSVKMQDPQFAGQTKERLSSRQCAAFVSGVVKDAFILWLNQNVQAAELLAEMAISSAQRRMRAAKKVVRKKLTSGPALPGKLADCTAQDLNRTELFLVEGDSAGGSAKQARDREYQAIMPLKGKILNTWEVSSDEVLASQEVHDISVAIGIDPDSDDLSQLRYGKICILADADSDGLHIATLLCALFVKHFRALVKHGHVYVALPPLYRIDLGKEVYYALTEEEKEGVLEQLKRKKGKPNVQRFKGLGEMNPMQLRETTLDPNTRRLVQLTIDDEDDQRTDAMMDMLLAKKRSEDRRNWLQEKGDMAEIEV.

Residues Tyr-5, Asn-42, Asp-69, 110–116, and Lys-334 contribute to the ATP site; that span reads GLHGVGI. One can recognise a Toprim domain in the interval 412–525; it reads TELFLVEGDS…HGHVYVALPP (114 aa). Mg(2+) is bound by residues Glu-418, Asp-490, and Asp-492.

It belongs to the type II topoisomerase family. ParE type 1 subfamily. In terms of assembly, heterotetramer composed of ParC and ParE. It depends on Mg(2+) as a cofactor. Requires Mn(2+) as cofactor. Ca(2+) is required as a cofactor.

It carries out the reaction ATP-dependent breakage, passage and rejoining of double-stranded DNA.. With respect to regulation, pyrrolopyrimidines inhibit both GyrB and its paralog in topoisomerase IV (parE). In terms of biological role, topoisomerase IV is essential for chromosome segregation; it is the principal protein responsible for decatenating newly replicated chromosomes. It relaxes supercoiled DNA. MukB stimulates the relaxation activity of topoisomerase IV and also has a modest effect on decatenation. The chain is DNA topoisomerase 4 subunit B from Escherichia coli (strain K12).